Here is a 462-residue protein sequence, read N- to C-terminus: Ribosomal protein uS12 methylthiotransferase RimO (462 aa).

In terms of domain architecture, MTTase N-terminal spans 22–133; the sequence is ASVAFLHLGC…IIEVLQRVRQ (112 aa). The [4Fe-4S] cluster site is built by Cys-31, Cys-67, Cys-96, Cys-171, Cys-175, and Cys-178. The Radical SAM core domain maps to 157–386; sequence TTGRFVSYLK…VAIQQPISAA (230 aa). The TRAM domain maps to 389–460; it reads QALIGQTVDV…LYDLTGEINH (72 aa).

Belongs to the methylthiotransferase family. RimO subfamily. [4Fe-4S] cluster is required as a cofactor.

It is found in the cytoplasm. It carries out the reaction L-aspartate(89)-[ribosomal protein uS12]-hydrogen + (sulfur carrier)-SH + AH2 + 2 S-adenosyl-L-methionine = 3-methylsulfanyl-L-aspartate(89)-[ribosomal protein uS12]-hydrogen + (sulfur carrier)-H + 5'-deoxyadenosine + L-methionine + A + S-adenosyl-L-homocysteine + 2 H(+). Its function is as follows. Catalyzes the methylthiolation of an aspartic acid residue of ribosomal protein uS12. The sequence is that of Ribosomal protein uS12 methylthiotransferase RimO from Prochlorococcus marinus (strain MIT 9211).